We begin with the raw amino-acid sequence, 484 residues long: MEKIRTRYAPSPTGYLHVGGTRTAIFNFLLAKHFNGEFIIRIEDTDTERNIKEGINSQFDNLRWLGVIADESVYNPGNYGPYLQSQKLAVYKKLAFDLIEKNLAYRCFCSKEKLESDRKQAINNHKTPKYLGHCRNLHSKKITNHLEKNDPFTIRLKINNEAEYSWNDLVRGQITIPGSALTDIVILKANGVATYNFAVVIDDYDMEITDVLRGAEHISNTAYQLAIYQALGFKRIPRFGHLSVIVDESGKKLSKRDEKTTQFIEQFKQQGYLPEALLNFLALLGWHPQYNQEFFNLKQLIENFSLSRVVSAPAFFDIKKLQWINANYIKQLTDNAYFNFIDNYLDVKVDYLKDKNREISLLFKNQITHGVQINELIRESFATKIGVENLAKKSHILFKNIKLFLEQLAKSLQGLEEWKAEQIKTTINKVGAVFNLKGKQLFMPIRLIFTNKEHGPDLAHIIEIFDKESAINLIKQFINATNLF.

The 'HIGH' region signature appears at 10–20 (PSPTGYLHVGG). The 'KMSKS' region motif lies at 252–256 (KLSKR). Position 255 (Lys255) interacts with ATP.

This sequence belongs to the class-I aminoacyl-tRNA synthetase family. Glutamate--tRNA ligase type 1 subfamily. Monomer.

The protein resides in the cytoplasm. It catalyses the reaction tRNA(Glu) + L-glutamate + ATP = L-glutamyl-tRNA(Glu) + AMP + diphosphate. Catalyzes the attachment of glutamate to tRNA(Glu) in a two-step reaction: glutamate is first activated by ATP to form Glu-AMP and then transferred to the acceptor end of tRNA(Glu). The protein is Glutamate--tRNA ligase of Mycoplasma genitalium (strain ATCC 33530 / DSM 19775 / NCTC 10195 / G37) (Mycoplasmoides genitalium).